A 240-amino-acid chain; its full sequence is Large ribosomal subunit protein bL25 (240 aa).

Disordered regions lie at residues 1–23 and 207–240; these read MATVKELKATARPAGGKGAARAE and PAAAPAAGAKAPAAGAKAPAAGAKAPAAPAAKKK.

The protein belongs to the bacterial ribosomal protein bL25 family. CTC subfamily. As to quaternary structure, part of the 50S ribosomal subunit; part of the 5S rRNA/L5/L18/L25 subcomplex. Contacts the 5S rRNA. Binds to the 5S rRNA independently of L5 and L18.

Its function is as follows. This is one of the proteins that binds to the 5S RNA in the ribosome where it forms part of the central protuberance. The chain is Large ribosomal subunit protein bL25 from Rhodopseudomonas palustris (strain BisB18).